The chain runs to 272 residues: Phosphoglycolate phosphatase 1 (272 aa).

D19 acts as the Nucleophile in catalysis. D19, D21, and D182 together coordinate Mg(2+).

It belongs to the HAD-like hydrolase superfamily. CbbY/CbbZ/Gph/YieH family. It depends on Mg(2+) as a cofactor.

The enzyme catalyses 2-phosphoglycolate + H2O = glycolate + phosphate. The protein operates within organic acid metabolism; glycolate biosynthesis; glycolate from 2-phosphoglycolate: step 1/1. In terms of biological role, specifically catalyzes the dephosphorylation of 2-phosphoglycolate. Is involved in the dissimilation of the intracellular 2-phosphoglycolate formed during the DNA repair of 3'-phosphoglycolate ends, a major class of DNA lesions induced by oxidative stress. In Pseudomonas aeruginosa (strain ATCC 15692 / DSM 22644 / CIP 104116 / JCM 14847 / LMG 12228 / 1C / PRS 101 / PAO1), this protein is Phosphoglycolate phosphatase 1.